A 200-amino-acid polypeptide reads, in one-letter code: Ribosomal RNA large subunit methyltransferase E (200 aa).

S-adenosyl-L-methionine contacts are provided by Gly51, Trp53, Asp71, Asp90, and Asp112. The active-site Proton acceptor is the Lys151.

The protein belongs to the class I-like SAM-binding methyltransferase superfamily. RNA methyltransferase RlmE family.

Its subcellular location is the cytoplasm. It carries out the reaction uridine(2552) in 23S rRNA + S-adenosyl-L-methionine = 2'-O-methyluridine(2552) in 23S rRNA + S-adenosyl-L-homocysteine + H(+). Functionally, specifically methylates the uridine in position 2552 of 23S rRNA at the 2'-O position of the ribose in the fully assembled 50S ribosomal subunit. The sequence is that of Ribosomal RNA large subunit methyltransferase E from Treponema pallidum (strain Nichols).